The chain runs to 317 residues: tRNA dimethylallyltransferase (317 aa).

14–21 (GPTASGKT) contributes to the ATP binding site. 16 to 21 (TASGKT) contacts substrate. 2 interaction with substrate tRNA regions span residues 39-42 (DSAL) and 163-167 (QRIQR).

Belongs to the IPP transferase family. Monomer. Mg(2+) serves as cofactor.

It carries out the reaction adenosine(37) in tRNA + dimethylallyl diphosphate = N(6)-dimethylallyladenosine(37) in tRNA + diphosphate. Its function is as follows. Catalyzes the transfer of a dimethylallyl group onto the adenine at position 37 in tRNAs that read codons beginning with uridine, leading to the formation of N6-(dimethylallyl)adenosine (i(6)A). The protein is tRNA dimethylallyltransferase of Stenotrophomonas maltophilia (strain R551-3).